A 282-amino-acid polypeptide reads, in one-letter code: NADPH-dependent 7-cyano-7-deazaguanine reductase (282 aa).

Position 88 to 90 (88 to 90) interacts with substrate; sequence IES. 90–91 contributes to the NADPH binding site; that stretch reads SK. Residue C190 is the Thioimide intermediate of the active site. D197 functions as the Proton donor in the catalytic mechanism. Substrate is bound at residue 229 to 230; that stretch reads HE. Residue 258-259 participates in NADPH binding; sequence RG.

This sequence belongs to the GTP cyclohydrolase I family. QueF type 2 subfamily. Homodimer.

Its subcellular location is the cytoplasm. It catalyses the reaction 7-aminomethyl-7-carbaguanine + 2 NADP(+) = 7-cyano-7-deazaguanine + 2 NADPH + 3 H(+). The protein operates within tRNA modification; tRNA-queuosine biosynthesis. Catalyzes the NADPH-dependent reduction of 7-cyano-7-deazaguanine (preQ0) to 7-aminomethyl-7-deazaguanine (preQ1). The sequence is that of NADPH-dependent 7-cyano-7-deazaguanine reductase from Escherichia coli O139:H28 (strain E24377A / ETEC).